We begin with the raw amino-acid sequence, 267 residues long: Tryptophan synthase alpha chain (267 aa).

Active-site proton acceptor residues include E49 and D60.

This sequence belongs to the TrpA family. In terms of assembly, tetramer of two alpha and two beta chains.

The catalysed reaction is (1S,2R)-1-C-(indol-3-yl)glycerol 3-phosphate + L-serine = D-glyceraldehyde 3-phosphate + L-tryptophan + H2O. The protein operates within amino-acid biosynthesis; L-tryptophan biosynthesis; L-tryptophan from chorismate: step 5/5. Functionally, the alpha subunit is responsible for the aldol cleavage of indoleglycerol phosphate to indole and glyceraldehyde 3-phosphate. This is Tryptophan synthase alpha chain from Methylococcus capsulatus (strain ATCC 33009 / NCIMB 11132 / Bath).